We begin with the raw amino-acid sequence, 126 residues long: Protein ApaG (126 aa).

Residues 2-126 form the ApaG domain; the sequence is SALDDSIRVE…FRLALPGLLH (125 aa).

This is Protein ApaG from Shewanella sp. (strain MR-4).